A 435-amino-acid polypeptide reads, in one-letter code: MSQTVNIVGAGLAGSEAAYQLAQRGIKVNLIEMRPVKQTPAHHTDKFAELVCSNSLRGNALTNGVGVLKEEMRRLDSLIISAADKARVPAGGALAVDRHDFSGYITETLRNHPNVTVINEEINSIPEGYTIIATGPLTTENLAKEIVDITGKDQLYFYDAAAPIIEKESIDMDKVYLKSRYDKGEAAYLNCPMTEEEFNRFYDAVLEAEVAPTNEFEKEKYFEGCMPFEVMAERGRKTLLFGPMKPVGLEDPKTGKRPFAVVQLRQDDAAGTLYNIVGFQTHLKWGAQKEVIRLIPGLENVDIVRYGVMHRNTFINSPDVLNEKYELIKEDRIQFAGQMTGVEGYVESAASGLVAGINLAHKLLDKGEVIFPRETMIGSMAYYISHAKNEKNFQPMNANFGLLPSLEKRIKDKKERYEAQANRALEYLENYKKTL.

Glycine 9 to glycine 14 contacts FAD.

The protein belongs to the MnmG family. TrmFO subfamily. The cofactor is FAD.

The protein resides in the cytoplasm. The enzyme catalyses uridine(54) in tRNA + (6R)-5,10-methylene-5,6,7,8-tetrahydrofolate + NADH + H(+) = 5-methyluridine(54) in tRNA + (6S)-5,6,7,8-tetrahydrofolate + NAD(+). The catalysed reaction is uridine(54) in tRNA + (6R)-5,10-methylene-5,6,7,8-tetrahydrofolate + NADPH + H(+) = 5-methyluridine(54) in tRNA + (6S)-5,6,7,8-tetrahydrofolate + NADP(+). In terms of biological role, catalyzes the folate-dependent formation of 5-methyl-uridine at position 54 (M-5-U54) in all tRNAs. The chain is Methylenetetrahydrofolate--tRNA-(uracil-5-)-methyltransferase TrmFO from Staphylococcus haemolyticus (strain JCSC1435).